We begin with the raw amino-acid sequence, 204 residues long: FMN-dependent NADH:quinone oxidoreductase (204 aa).

FMN is bound by residues serine 10 and 16–18 (SKS).

This sequence belongs to the azoreductase type 1 family. Homodimer. FMN is required as a cofactor.

The catalysed reaction is 2 a quinone + NADH + H(+) = 2 a 1,4-benzosemiquinone + NAD(+). The enzyme catalyses N,N-dimethyl-1,4-phenylenediamine + anthranilate + 2 NAD(+) = 2-(4-dimethylaminophenyl)diazenylbenzoate + 2 NADH + 2 H(+). Quinone reductase that provides resistance to thiol-specific stress caused by electrophilic quinones. Functionally, also exhibits azoreductase activity. Catalyzes the reductive cleavage of the azo bond in aromatic azo compounds to the corresponding amines. In Ruegeria pomeroyi (strain ATCC 700808 / DSM 15171 / DSS-3) (Silicibacter pomeroyi), this protein is FMN-dependent NADH:quinone oxidoreductase.